We begin with the raw amino-acid sequence, 134 residues long: Large ribosomal subunit protein uL22 (134 aa).

It belongs to the universal ribosomal protein uL22 family. Part of the 50S ribosomal subunit.

In terms of biological role, this protein binds specifically to 23S rRNA; its binding is stimulated by other ribosomal proteins, e.g. L4, L17, and L20. It is important during the early stages of 50S assembly. It makes multiple contacts with different domains of the 23S rRNA in the assembled 50S subunit and ribosome. The globular domain of the protein is located near the polypeptide exit tunnel on the outside of the subunit, while an extended beta-hairpin is found that lines the wall of the exit tunnel in the center of the 70S ribosome. This Rhodococcus jostii (strain RHA1) protein is Large ribosomal subunit protein uL22.